Here is a 328-residue protein sequence, read N- to C-terminus: Extracellular exo-alpha-(1-&gt;5)-L-arabinofuranosidase (328 aa).

Positions 1–43 form a signal peptide, tat-tyPE signal; sequence MCTREAVRMSREHDLPEIPSRRLLLKGAAAAGALTAVPGVAHA. The Proton acceptor role is filled by aspartate 60. The active-site Proton donor is the glutamate 236.

It belongs to the glycosyl hydrolase 43 family. Post-translationally, predicted to be exported by the Tat system. The position of the signal peptide cleavage has been experimentally proven.

Its subcellular location is the secreted. It carries out the reaction Hydrolysis of terminal non-reducing alpha-L-arabinofuranoside residues in alpha-L-arabinosides.. It participates in glycan metabolism; L-arabinan degradation. Functionally, involved in the degradation of arabinan and is a key enzyme in the complete degradation of the plant cell wall. Catalyzes only the cleavage of terminal alpha-(1-&gt;5) arabinofuranosyl bonds of arabinan present in the arabinofuranosyl polysaccharides or oligosaccharides. It cannot act on other arabinose-containing polysaccharides and arabinoxylo-oligosaccharides. The polypeptide is Extracellular exo-alpha-(1-&gt;5)-L-arabinofuranosidase (Streptomyces chartreusis).